We begin with the raw amino-acid sequence, 378 residues long: Anhydro-N-acetylmuramic acid kinase (378 aa).

An ATP-binding site is contributed by 23–30 (GTSMDGAD).

Belongs to the anhydro-N-acetylmuramic acid kinase family.

The enzyme catalyses 1,6-anhydro-N-acetyl-beta-muramate + ATP + H2O = N-acetyl-D-muramate 6-phosphate + ADP + H(+). It functions in the pathway amino-sugar metabolism; 1,6-anhydro-N-acetylmuramate degradation. It participates in cell wall biogenesis; peptidoglycan recycling. In terms of biological role, catalyzes the specific phosphorylation of 1,6-anhydro-N-acetylmuramic acid (anhMurNAc) with the simultaneous cleavage of the 1,6-anhydro ring, generating MurNAc-6-P. Is required for the utilization of anhMurNAc either imported from the medium or derived from its own cell wall murein, and thus plays a role in cell wall recycling. The polypeptide is Anhydro-N-acetylmuramic acid kinase (Bordetella bronchiseptica (strain ATCC BAA-588 / NCTC 13252 / RB50) (Alcaligenes bronchisepticus)).